The sequence spans 62 residues: Potassium channel toxin alpha-KTx Tx773 (62 aa).

The first 18 residues, 1–18 (MQKLFIVLLLFCILRLDA), serve as a signal peptide directing secretion. 3 cysteine pairs are disulfide-bonded: C28-C46, C33-C59, and C37-C61.

The protein belongs to the short scorpion toxin superfamily. Potassium channel inhibitor family. Alpha-KTx 23 subfamily. In terms of tissue distribution, expressed by the venom gland.

Its subcellular location is the secreted. In terms of biological role, may block potassium channels. In Buthus israelis (Israeli scorpion), this protein is Potassium channel toxin alpha-KTx Tx773.